The following is an 88-amino-acid chain: Small ribosomal subunit protein bS16 (88 aa).

The protein belongs to the bacterial ribosomal protein bS16 family.

The protein is Small ribosomal subunit protein bS16 of Sorangium cellulosum (strain So ce56) (Polyangium cellulosum (strain So ce56)).